A 239-amino-acid chain; its full sequence is Probable transcriptional regulatory protein EF_2866 (239 aa).

This sequence belongs to the TACO1 family. YeeN subfamily.

It is found in the cytoplasm. The protein is Probable transcriptional regulatory protein EF_2866 of Enterococcus faecalis (strain ATCC 700802 / V583).